A 252-amino-acid polypeptide reads, in one-letter code: Indole-3-glycerol phosphate synthase (252 aa).

The protein belongs to the TrpC family.

The catalysed reaction is 1-(2-carboxyphenylamino)-1-deoxy-D-ribulose 5-phosphate + H(+) = (1S,2R)-1-C-(indol-3-yl)glycerol 3-phosphate + CO2 + H2O. The protein operates within amino-acid biosynthesis; L-tryptophan biosynthesis; L-tryptophan from chorismate: step 4/5. This chain is Indole-3-glycerol phosphate synthase, found in Listeria monocytogenes serotype 4a (strain HCC23).